Here is a 333-residue protein sequence, read N- to C-terminus: Chemokine XC receptor 1 (333 aa).

Topologically, residues 1–31 (MESSGNPESTTFFYYDLQSQPCENQAWVFAT) are extracellular. The helical transmembrane segment at 32–59 (LATTVLYCLVFLLSLVGNSLVLWVLVKY) threads the bilayer. Residues 60 to 69 (ESLESLTNIF) lie on the Cytoplasmic side of the membrane. A helical transmembrane segment spans residues 70-89 (ILNLCLSDLVFACLLPVWIS). Residues 90–103 (PYHWGWVLGDFLCK) are Extracellular-facing. A disulfide bridge links C102 with C175. The chain crosses the membrane as a helical span at residues 104–125 (LLNMIFSISLYSSIFFLTIMTI). At 126-142 (HRYLSVVSPLSTLRVPT) the chain is on the cytoplasmic side. A helical transmembrane segment spans residues 143–167 (LRCRVLVTMAVWVASILSSILDTIF). Residues 168–190 (HKVLSSGCDYSELTWYLTSVYQH) are Extracellular-facing. A helical membrane pass occupies residues 191 to 209 (NLFFLLSLGIILFCYVEIL). The Cytoplasmic portion of the chain corresponds to 210–225 (RTLFRSRSKRRHRTVK). Residues 226–250 (LIFAIVVAYFLSWGPYNFTLFLQTL) traverse the membrane as a helical segment. The Extracellular segment spans residues 251 to 267 (FRTQIIRSCEAKQQLEY). Residues 268–291 (ALLICRNLAFSHCCFNPVLYVFVG) form a helical membrane-spanning segment. At 292 to 333 (VKFRTHLKHVLRQFWFCRLQAPSPASIPHSPGAFAYEGASFY) the chain is on the cytoplasmic side.

This sequence belongs to the G-protein coupled receptor 1 family.

The protein localises to the cell membrane. Functionally, receptor for chemokines SCYC1 and SCYC2. Subsequently transduces a signal by increasing the intracellular calcium ions level. Receptor for XCL1/Lymphotactin. The polypeptide is Chemokine XC receptor 1 (XCR1) (Homo sapiens (Human)).